We begin with the raw amino-acid sequence, 188 residues long: Putative manganese efflux pump MntP (188 aa).

Transmembrane regions (helical) follow at residues 3–23, 35–55, 63–83, 107–127, 131–151, and 167–187; these read FYAL…VALA, IAAT…AGWV, FISE…GLKM, VLTA…LAFM, IAFA…VGLA, and AGGL…LGLI.

This sequence belongs to the MntP (TC 9.B.29) family.

The protein resides in the cell inner membrane. Probably functions as a manganese efflux pump. This chain is Putative manganese efflux pump MntP, found in Neisseria meningitidis serogroup A / serotype 4A (strain DSM 15465 / Z2491).